Reading from the N-terminus, the 138-residue chain is Proofreading thioesterase EntH (138 aa).

Residue Glu-64 is the Nucleophile or proton acceptor of the active site.

This sequence belongs to the thioesterase PaaI family. Homotetramer. Dimer of dimers. Interacts specifically with the aryl carrier protein (ArCP) domain of EntB.

It localises to the cytoplasm. Its pathway is siderophore biosynthesis; enterobactin biosynthesis. In terms of biological role, required for optimal enterobactin synthesis. Acts as a proofreading enzyme that prevents EntB misacylation by hydrolyzing the thioester bound existing between EntB and wrongly charged molecules. This Citrobacter rodentium (strain ICC168) (Citrobacter freundii biotype 4280) protein is Proofreading thioesterase EntH.